The sequence spans 339 residues: DNA-directed RNA polymerase subunit alpha (339 aa).

The segment at 1–233 (MVREEVAGST…DLFLPFLHAE (233 aa)) is alpha N-terminal domain (alpha-NTD). The segment at 264 to 339 (KKGIPLNCIF…IDLLKNKLSF (76 aa)) is alpha C-terminal domain (alpha-CTD).

It belongs to the RNA polymerase alpha chain family. In terms of assembly, in plastids the minimal PEP RNA polymerase catalytic core is composed of four subunits: alpha, beta, beta', and beta''. When a (nuclear-encoded) sigma factor is associated with the core the holoenzyme is formed, which can initiate transcription.

It is found in the plastid. It localises to the chloroplast. The catalysed reaction is RNA(n) + a ribonucleoside 5'-triphosphate = RNA(n+1) + diphosphate. Its function is as follows. DNA-dependent RNA polymerase catalyzes the transcription of DNA into RNA using the four ribonucleoside triphosphates as substrates. The polypeptide is DNA-directed RNA polymerase subunit alpha (Thinopyrum bessarabicum (Wheatgrass)).